Consider the following 1742-residue polypeptide: Kinase non-catalytic C-lobe domain-containing protein 1 (1742 aa).

Positions 37–217 (VSLADILSLR…QELSENTWRG (181 aa)) constitute a KIND 1 domain. Disordered stretches follow at residues 215 to 288 (WRGR…EGLA) and 365 to 455 (FKTQ…TEQS). S267 carries the phosphoserine modification. Over residues 403–412 (LEASSPSQGS) the composition is skewed to polar residues. The span at 426–445 (DSDHEGHIPRSEEKIPEESR) shows a compositional bias: basic and acidic residues. The 165-residue stretch at 456 to 620 (LSLKDLLSKL…RASTCKVHPE (165 aa)) folds into the KIND 2 domain. Disordered regions lie at residues 703-727 (DQLA…REGT), 744-876 (SNQL…KMTA), 948-1006 (GPAS…LSDI), and 1028-1076 (VTRE…ASDF). Residues 711-727 (SNEKPKEGSGHLDREGT) are compositionally biased toward basic and acidic residues. The span at 755-771 (GATPDPDGDSGSPSSAT) shows a compositional bias: low complexity. The span at 782–791 (VTQQKGTSGT) shows a compositional bias: polar residues. The segment covering 847-861 (SDGHPEKPRPADRKL) has biased composition (basic and acidic residues). Low complexity predominate over residues 949–965 (PASPSESTSEEPGSQPE). Residue S951 is modified to Phosphoserine. Residues 1043-1053 (GPSQDSTSHAS) show a composition bias toward polar residues. Residues 1112-1177 (HTELEAQSPE…EMKSKVQFLS (66 aa)) adopt a coiled-coil conformation. An N-terminal Ras-GEF domain is found at 1239–1367 (KARILQAGTP…ALLEVGTERR (129 aa)). Residues 1461–1712 (STNQLFTQLT…SGADVSILAA (252 aa)) form the Ras-GEF domain.

In terms of assembly, interacts (via KIND2) with MAP2; the interaction enhances MAP2 phosphorylation and localizes KNDC1 to dendrites. In terms of tissue distribution, highly expressed in the brain and at low levels in the ovary. In the brain it is most prominently expressed in the cerebellum where it is restricted to the granular Purkinje cell layer.

It is found in the cell projection. The protein resides in the dendrite. It localises to the perikaryon. Its function is as follows. RAS-Guanine nucleotide exchange factor (GEF) that controls the negative regulation of neuronal dendrite growth by mediating a signaling pathway linking RAS and MAP2. May be involved in cellular senescence. This chain is Kinase non-catalytic C-lobe domain-containing protein 1, found in Mus musculus (Mouse).